The primary structure comprises 266 residues: GTP cyclohydrolase MptA (266 aa).

The protein belongs to the GTP cyclohydrolase IV family. As to quaternary structure, homodimer. It depends on Fe(2+) as a cofactor.

The enzyme catalyses GTP + H2O = 7,8-dihydroneopterin 2',3'-cyclic phosphate + formate + diphosphate + H(+). The protein operates within cofactor biosynthesis; 5,6,7,8-tetrahydromethanopterin biosynthesis. Its function is as follows. Converts GTP to 7,8-dihydro-D-neopterin 2',3'-cyclic phosphate, the first intermediate in the biosynthesis of coenzyme methanopterin. The protein is GTP cyclohydrolase MptA of Pyrococcus abyssi (strain GE5 / Orsay).